The primary structure comprises 143 residues: Large ribosomal subunit protein uL15 (143 aa).

The interval 1–52 (MELNTIQPADGAKHYKRRVGRGIGSGLGKTAGRGHKGQKSRSGGFHKVGFEG) is disordered. Residues 21–31 (RGIGSGLGKTA) are compositionally biased toward gly residues.

This sequence belongs to the universal ribosomal protein uL15 family. In terms of assembly, part of the 50S ribosomal subunit.

Its function is as follows. Binds to the 23S rRNA. This Herminiimonas arsenicoxydans protein is Large ribosomal subunit protein uL15.